A 367-amino-acid chain; its full sequence is Quinolinate synthase (367 aa).

Residues H64 and S82 each coordinate iminosuccinate. [4Fe-4S] cluster is bound at residue C127. Iminosuccinate is bound by residues 153–155 (YVN) and S170. Residue C216 coordinates [4Fe-4S] cluster. Iminosuccinate-binding positions include 242–244 (HPE) and T259. C302 contributes to the [4Fe-4S] cluster binding site.

The protein belongs to the quinolinate synthase family. Type 2 subfamily. It depends on [4Fe-4S] cluster as a cofactor.

The protein resides in the cytoplasm. It catalyses the reaction iminosuccinate + dihydroxyacetone phosphate = quinolinate + phosphate + 2 H2O + H(+). Its pathway is cofactor biosynthesis; NAD(+) biosynthesis; quinolinate from iminoaspartate: step 1/1. Its function is as follows. Catalyzes the condensation of iminoaspartate with dihydroxyacetone phosphate to form quinolinate. This chain is Quinolinate synthase, found in Caulobacter vibrioides (strain ATCC 19089 / CIP 103742 / CB 15) (Caulobacter crescentus).